The sequence spans 240 residues: Putative tyrosine phosphatase 067L (240 aa).

The 149-residue stretch at glutamine 3–glutamine 151 folds into the Tyrosine-protein phosphatase domain. Cysteine 96 serves as the catalytic Phosphocysteine intermediate.

It belongs to the protein-tyrosine phosphatase family.

It carries out the reaction O-phospho-L-tyrosyl-[protein] + H2O = L-tyrosyl-[protein] + phosphate. The protein is Putative tyrosine phosphatase 067L of Aedes vexans (Inland floodwater mosquito).